Consider the following 175-residue polypeptide: Inosine/xanthosine triphosphatase (175 aa).

Residue 8 to 13 (TTNPAK) coordinates substrate. 2 residues coordinate Mg(2+): Glu38 and Glu68. 68–69 (EA) lines the substrate pocket.

The protein belongs to the YjjX NTPase family. In terms of assembly, homodimer. Mg(2+) serves as cofactor. Requires Mn(2+) as cofactor.

The enzyme catalyses XTP + H2O = XDP + phosphate + H(+). It carries out the reaction ITP + H2O = IDP + phosphate + H(+). Phosphatase that hydrolyzes non-canonical purine nucleotides such as XTP and ITP to their respective diphosphate derivatives. Probably excludes non-canonical purines from DNA/RNA precursor pool, thus preventing their incorporation into DNA/RNA and avoiding chromosomal lesions. The sequence is that of Inosine/xanthosine triphosphatase (yjjX) from Escherichia coli O127:H6 (strain E2348/69 / EPEC).